The primary structure comprises 483 residues: MTAAVTENNGAGSASAVAGRVVRVIGPVVDVEFPRGAVPELFNALNAEITLPSVAKTLTLEVAQHLGDNLVRTVSMQPTDGLVRGTAVTDSGKPISVPVGDVVKGHVFNALGDCLDTPGLGRDGEQWGIHRKPPAFDQLEGKTEILETGIKVIDLLTPYVKGGKIGLFGGAGVGKTVLIQEMITRIAREFSGTSVFAGVGERTREGTDLHLEMEEMGVLQDTALVFGQMDEPPGTRMRVALSALTMAEYFRDVQGQDVLLFIDNIFRFTQAGSEVSTLLGRMPSAVGYQPTLADEMGELQERITSTRGRSITSLQAIYVPADDYTDPAPATTFAHLDATTELSRPISQMGIYPAVDPLSSTSRILEPGIVGAEHFRVANEVKRILQKYKELQDIIAILGMDELQEEDKVLVGRARRIQKFLGQNFIVAEKFTGEPGSVVPLRDTIEAFDRVCKGEFDHLPEQAFNSCGGLDDVEAAAKKMAGK.

169 to 176 (GGAGVGKT) provides a ligand contact to ATP.

Belongs to the ATPase alpha/beta chains family. In terms of assembly, F-type ATPases have 2 components, CF(1) - the catalytic core - and CF(0) - the membrane proton channel. CF(1) has five subunits: alpha(3), beta(3), gamma(1), delta(1), epsilon(1). CF(0) has three main subunits: a(1), b(2) and c(9-12). The alpha and beta chains form an alternating ring which encloses part of the gamma chain. CF(1) is attached to CF(0) by a central stalk formed by the gamma and epsilon chains, while a peripheral stalk is formed by the delta and b chains.

The protein resides in the cell membrane. It catalyses the reaction ATP + H2O + 4 H(+)(in) = ADP + phosphate + 5 H(+)(out). In terms of biological role, produces ATP from ADP in the presence of a proton gradient across the membrane. The catalytic sites are hosted primarily by the beta subunits. This Rhodococcus erythropolis (strain PR4 / NBRC 100887) protein is ATP synthase subunit beta.